A 288-amino-acid chain; its full sequence is uncharacterized protein (288 aa).

Disordered stretches follow at residues 31 to 52 (KAVD…EAPS) and 179 to 288 (YPSK…VELK). Residues 206–217 (RPSSPTNFSKLI) show a composition bias toward polar residues. Positions 221-236 (YKDEWLQQQADSDKRA) are enriched in basic and acidic residues. 2 stretches are compositionally biased toward low complexity: residues 237 to 249 (PQTP…SPSP) and 267 to 276 (AAESSPLSSA).

This is an uncharacterized protein from Bos taurus (Bovine).